Reading from the N-terminus, the 612-residue chain is MKPKKRQMEYLTRGLIAVQTEQGVFVSWRFLGTDHETTAFHLYRDGKRITRDPIAESTNFLDQNGTADSVYQVAAVNKGREEKLSKKARVWQENVLEVPLAKPEGGVTPDGKPYTYSANDASVGDIDGDGEYEMILKWDPSNSKDNAHDGYTGEVLIDAYKLDGTFLWRINLGRNIRAGAHYTQFMVYDLDGDGKAEIAMKTADGTTDGKGHIIGDEQADFRNEQGRILSGPEYLTVFKGETGEALTTVEYEPPRGKLEDWGDGYGNRMDRFLAGTAYLDGERPSLVMARGYYTRTVLVAYDFRNGRLKKRWVFDSNQPGHEAYAGQGNHSLSVADVDGDGKDEIIYGAMAVDHDGTGLYSTGLGHGDAMHVGDLDPSRKGLEVFQVHEDATKPYGLSLRDAGTGEILWGVHAGTDVGRGMAAHIDPSYKGSLVWGIDPPGNDGMSYGLFTSKGEKISDKAPSSANFAIWWDGDLVRELLDHDWDGTIGRPKIEKWDAENGCLKTIFQPAGVLSNNGTKGNPVLQANLFGDWREEVIWRTEDSSALRIYTTTHLTRHCFYTLMHDPVYRLGIAWQNTAYNQPPHTSFYLGTGMKKPPKPALYIAGSKAEAPL.

Residue asparagine 119 coordinates substrate. Ca(2+) contacts are provided by aspartate 120, aspartate 125, aspartate 127, aspartate 129, glutamate 131, and glutamate 133. Substrate-binding residues include aspartate 139, glutamate 154, and arginine 174. Residues aspartate 189, aspartate 191, aspartate 193, lysine 195, and glutamate 197 each contribute to the Ca(2+) site. Residues glycine 205 and arginine 222 each coordinate substrate. Histidine 330, aspartate 336, aspartate 338, aspartate 340, lysine 342, glutamate 344, aspartate 353, histidine 354, histidine 366, aspartate 368, aspartate 374, aspartate 376, arginine 379, glycine 381, glutamate 383, and glutamate 389 together coordinate Ca(2+). Arginine 419 provides a ligand contact to substrate. Ca(2+) is bound by residues aspartate 472, aspartate 474, valine 476, and glutamate 478. 516-518 (NGT) contacts substrate. Ca(2+)-binding residues include asparagine 527, phenylalanine 529, aspartate 531, arginine 533, glutamate 535, asparagine 576, and alanine 578. Substrate is bound at residue tyrosine 579. A Ca(2+)-binding site is contributed by asparagine 580.

The protein belongs to the polysaccharide lyase 11 family. In terms of assembly, monomer. Requires Mn(2+) as cofactor. The cofactor is Zn(2+). Co(2+) is required as a cofactor. Ca(2+) serves as cofactor.

Its subcellular location is the secreted. It catalyses the reaction Exotype eliminative cleavage of alpha-L-rhamnopyranosyl-(1-&gt;4)-alpha-D-galactopyranosyluronic acid bonds of rhamnogalacturonan I oligosaccharides containing alpha-L-rhamnopyranose at the reducing end and 4-deoxy-4,5-unsaturated D-galactopyranosyluronic acid at the non-reducing end. The products are the disaccharide 2-O-(4-deoxy-beta-L-threo-hex-4-enopyranuronosyl)-alpha-L-rhamnopyranose and the shortened rhamnogalacturonan oligosaccharide containing one 4-deoxy-4,5-unsaturated D-galactopyranosyluronic acid at the non-reducing end.. Functionally, pectinolytic enzyme that degrades type I rhamnogalacturonan from plant cell walls and releases disaccharide products. Degrades rhamnogalacturonan, polygalacturonic acid and pectic acid. Has very low activity on pectin. The sequence is that of Rhamnogalacturonan exolyase YesX (yesX) from Bacillus subtilis (strain 168).